The following is a 41-amino-acid chain: MADQPEKNPNTQPVELNRTSLYLGLLLVFVVGLLFSSYFLN.

The helical transmembrane segment at 20–40 (SLYLGLLLVFVVGLLFSSYFL) threads the bilayer.

This sequence belongs to the PsbL family. In terms of assembly, PSII is composed of 1 copy each of membrane proteins PsbA, PsbB, PsbC, PsbD, PsbE, PsbF, PsbH, PsbI, PsbJ, PsbK, PsbL, PsbM, PsbT, PsbX, PsbY, PsbZ, Psb30/Ycf12, peripheral proteins PsbO, CyanoQ (PsbQ), PsbU, PsbV and a large number of cofactors. It forms dimeric complexes.

The protein localises to the cellular thylakoid membrane. One of the components of the core complex of photosystem II (PSII). PSII is a light-driven water:plastoquinone oxidoreductase that uses light energy to abstract electrons from H(2)O, generating O(2) and a proton gradient subsequently used for ATP formation. It consists of a core antenna complex that captures photons, and an electron transfer chain that converts photonic excitation into a charge separation. This subunit is found at the monomer-monomer interface and is required for correct PSII assembly and/or dimerization. This is Photosystem II reaction center protein L from Synechococcus sp. (strain JA-3-3Ab) (Cyanobacteria bacterium Yellowstone A-Prime).